Consider the following 247-residue polypeptide: MSGLRPGTQVDPEIELFVKAGSDGESIGNCPFCQRLFMILWLKGVKFNVTTVDMTRKPEELKDLAPGTNPPFLVYNKELKTDFIKIEEFLEQTLAPPRYPHLSPKYKESFDVGCNLFAKFSAYIKNTQKEANKNFEKSLLKEFKRLDDYLNTPLLDEIDPDSAEEPPVSRRLFLDGDQLTLADCSLLPKLNIIKVAAKKYRDFDIPAEFSGVWRYLHNAYAREEFTHTCPEDKEIENTYANVAKQKS.

Positions 1 to 94 (MSGLRPGTQV…KIEEFLEQTL (94 aa)) are N-terminal. The segment at 1 to 96 (MSGLRPGTQV…EEFLEQTLAP (96 aa)) is required for insertion into the membrane. Position 25 (glutamate 25) interacts with glutathione. The short motif at 30 to 33 (CPFC) is the G-site element. Cysteine 30 and cysteine 33 are disulfide-bonded. Residues 32–52 (FCQRLFMILWLKGVKFNVTTV) traverse the membrane as a helical segment. The GST C-terminal domain occupies 76-239 (NKELKTDFIK…PEDKEIENTY (164 aa)). Residues 95 to 106 (APPRYPHLSPKY) form a joint loop region. The tract at residues 107-247 (KESFDVGCNL…TYANVAKQKS (141 aa)) is C-terminal. A foot loop region spans residues 151–171 (NTPLLDEIDPDSAEEPPVSRR). Histidine 227 lines the glutathione pocket.

It belongs to the chloride channel CLIC family. As to quaternary structure, monomer. Interacts with TRAPPC2 and RYR2. In terms of tissue distribution, expressed in adult and fetal brain, heart, skeletal muscle, liver, lung, and spleen. Detected in adult stomach and testis. Expressed in fetal thymus and kidney.

It localises to the cytoplasm. The protein localises to the membrane. It carries out the reaction chloride(in) = chloride(out). The catalysed reaction is tert-butyl hydroperoxide + 2 glutathione = tert-butanol + glutathione disulfide + H2O. It catalyses the reaction cumene hydroperoxide + 2 glutathione = 2-phenylpropan-2-ol + glutathione disulfide + H2O. Its activity is regulated as follows. The channel conductance is regulated by pH. Its function is as follows. In the soluble state, catalyzes glutaredoxin-like thiol disulfide exchange reactions with reduced glutathione as electron donor. Displays weak glutathione peroxidase activity. Can insert into membranes and form chloride ion channels. Membrane insertion seems to be redox-regulated and may occur only under oxidizing conditions. Modulates the activity of RYR2 and inhibits calcium influx. In Homo sapiens (Human), this protein is Chloride intracellular channel protein 2.